Reading from the N-terminus, the 517-residue chain is Ribonuclease Y (517 aa).

The helical transmembrane segment at 1–21 (MIEFLIGLIAAVVGILVGYLI) threads the bilayer. The region spanning 207–271 (LINVVNIKND…IAVRTVELLV (65 aa)) is the KH domain. Residues 333–426 (ALIHSLEVAH…VCTADVLSAA (94 aa)) enclose the HD domain.

It belongs to the RNase Y family.

The protein localises to the cell membrane. Functionally, endoribonuclease that initiates mRNA decay. In Campylobacter hominis (strain ATCC BAA-381 / DSM 21671 / CCUG 45161 / LMG 19568 / NCTC 13146 / CH001A), this protein is Ribonuclease Y.